We begin with the raw amino-acid sequence, 798 residues long: ATP-dependent RNA helicase bel (798 aa).

The segment at 16 to 248 (VAGLDLNGGS…SRWKEGGGSN (233 aa)) is disordered. A compositionally biased stretch (polar residues) spans 31–42 (PITSKTSTNSVT). Gly residues-rich tracts occupy residues 94–110 (RGGG…GGRG), 118–132 (YGYG…GGGG), and 154–178 (SGGG…GGSG). 2 positions are modified to phosphoserine: Ser177 and Ser179. Positions 198–209 (RNDRWQEPERPA) are enriched in basic and acidic residues. Phosphoserine occurs at positions 214 and 219. A Q motif motif is present at residues 295–323 (TSFDDVQLTEIIRNNVALARYDKPTPVQK). ATP-binding positions include 315–322 (YDKPTPVQ) and 339–346 (AQTGSGKT). A Helicase ATP-binding domain is found at 326-515 (IPIIINGRDL…SDFLSNYIFL (190 aa)). The short motif at 459-462 (DEAD) is the DEAD box element. Positions 542–693 (YLLDLLSSIR…EIPSFMEDMS (152 aa)) constitute a Helicase C-terminal domain. The residue at position 638 (Ser638) is a Phosphoserine. Disordered regions lie at residues 689–765 (MEDM…SGGG) and 778–798 (GGSY…WWAQ). Composition is skewed to gly residues over residues 706–717 (RGGGGRYGGGFG) and 740–750 (GGSGSGGGGGS).

This sequence belongs to the DEAD box helicase family. DDX3/DED1 subfamily. Vas and bel colocalize in nuage (perinuclear, electron-dense granules in germline cells) and at the oocyte posterior during oogenesis.

It is found in the cytoplasm. The enzyme catalyses ATP + H2O = ADP + phosphate + H(+). In terms of biological role, ATP-dependent RNA helicase that is essential and required for cellular function, larval growth, and for male and female fertility. Also required for RNA interference (RNAi), double-stranded RNA induces potent and specific gene silencing, by acting downstream of dsRNA internalization. RNAi is mediated by the RNA-induced silencing complex (RISC), a sequence-specific, multicomponent nuclease that destroys or silences messenger RNAs homologous to the silencing trigger. In Drosophila melanogaster (Fruit fly), this protein is ATP-dependent RNA helicase bel.